We begin with the raw amino-acid sequence, 117 residues long: Ribosome-binding factor A (117 aa).

It belongs to the RbfA family. As to quaternary structure, monomer. Binds 30S ribosomal subunits, but not 50S ribosomal subunits or 70S ribosomes.

The protein resides in the cytoplasm. Its function is as follows. One of several proteins that assist in the late maturation steps of the functional core of the 30S ribosomal subunit. Associates with free 30S ribosomal subunits (but not with 30S subunits that are part of 70S ribosomes or polysomes). Required for efficient processing of 16S rRNA. May interact with the 5'-terminal helix region of 16S rRNA. This Leuconostoc mesenteroides subsp. mesenteroides (strain ATCC 8293 / DSM 20343 / BCRC 11652 / CCM 1803 / JCM 6124 / NCDO 523 / NBRC 100496 / NCIMB 8023 / NCTC 12954 / NRRL B-1118 / 37Y) protein is Ribosome-binding factor A.